The chain runs to 117 residues: Large ribosomal subunit protein bL20c (117 aa).

The protein belongs to the bacterial ribosomal protein bL20 family.

It localises to the plastid. Functionally, binds directly to 23S ribosomal RNA and is necessary for the in vitro assembly process of the 50S ribosomal subunit. It is not involved in the protein synthesizing functions of that subunit. The sequence is that of Large ribosomal subunit protein bL20c (rpl20) from Euglena longa (Euglenophycean alga).